The primary structure comprises 93 residues: Histone H2B (93 aa).

A compositionally biased stretch (low complexity) spans 1 to 12 (MPEPAKSAPAPK). Residues 1-31 (MPEPAKSAPAPKKGSKKAVTKTQKKGDKKRX) are disordered. N6-acetyllysine is present on residues lysine 6 and lysine 13. Residues 13 to 28 (KGSKKAVTKTQKKGDK) show a composition bias toward basic residues. At serine 15 the chain carries Phosphoserine. Lysine 16 and lysine 21 each carry N6-acetyllysine.

The protein belongs to the histone H2B family. As to quaternary structure, the nucleosome is a histone octamer containing two molecules each of H2A, H2B, H3 and H4 assembled in one H3-H4 heterotetramer and two H2A-H2B heterodimers. The octamer wraps approximately 147 bp of DNA. In terms of processing, monoubiquitination at the C-terminal Lys gives a specific tag for epigenetic transcriptional activation and is also prerequisite for histone H3 'Lys-4' and 'Lys-79' methylation. Post-translationally, phosphorylated on Ser-15 during apoptosis; which facilitates apoptotic chromatin condensation.

Its subcellular location is the nucleus. It localises to the chromosome. Core component of nucleosome. Nucleosomes wrap and compact DNA into chromatin, limiting DNA accessibility to the cellular machineries which require DNA as a template. Histones thereby play a central role in transcription regulation, DNA repair, DNA replication and chromosomal stability. DNA accessibility is regulated via a complex set of post-translational modifications of histones, also called histone code, and nucleosome remodeling. The sequence is that of Histone H2B from Crocodylus niloticus (Nile crocodile).